The sequence spans 262 residues: Phosphomannomutase 1 (262 aa).

Position 2 is an N-acetylalanine (A2). D19 functions as the Nucleophile in the catalytic mechanism. Mg(2+) is bound by residues D19 and D21. D21 functions as the Proton donor/acceptor in the catalytic mechanism. R28, R132, R143, R150, M186, S188, and D190 together coordinate alpha-D-mannose 1-phosphate. 4 residues coordinate Mg(2+): N218, F230, D232, and T235. S242 is subject to Phosphoserine.

It belongs to the eukaryotic PMM family. In terms of assembly, homodimer. The cofactor is Mg(2+). In terms of tissue distribution, strong expression in liver, heart, brain, and pancreas; lower expression in skeletal muscle.

The protein localises to the cytoplasm. It carries out the reaction alpha-D-mannose 1-phosphate = D-mannose 6-phosphate. The protein operates within nucleotide-sugar biosynthesis; GDP-alpha-D-mannose biosynthesis; alpha-D-mannose 1-phosphate from D-fructose 6-phosphate: step 2/2. IMP, a metabolite whose concentration is elevated in anoxia, inhibits phosphomannomutase and phosphoglucomutase activities and strongly enhances glucose-1,6-bisphosphatase activity. Its function is as follows. Involved in the synthesis of the GDP-mannose and dolichol-phosphate-mannose required for a number of critical mannosyl transfer reactions. In addition, may be responsible for the degradation of glucose-1,6-bisphosphate in ischemic brain. This chain is Phosphomannomutase 1 (PMM1), found in Homo sapiens (Human).